Here is a 283-residue protein sequence, read N- to C-terminus: Polyamine aminopropyltransferase (283 aa).

A PABS domain is found at 5 to 238 (TTWIDEYQKG…GIWSWTFASK (234 aa)). S-methyl-5'-thioadenosine is bound at residue Q32. H63 and D87 together coordinate spermidine. Residues E107 and 139–140 (DG) each bind S-methyl-5'-thioadenosine. D158 functions as the Proton acceptor in the catalytic mechanism. Position 158-161 (158-161 (DCSD)) interacts with spermidine.

The protein belongs to the spermidine/spermine synthase family. As to quaternary structure, homodimer or homotetramer.

The protein resides in the cytoplasm. It carries out the reaction S-adenosyl 3-(methylsulfanyl)propylamine + putrescine = S-methyl-5'-thioadenosine + spermidine + H(+). It participates in amine and polyamine biosynthesis; spermidine biosynthesis; spermidine from putrescine: step 1/1. Functionally, catalyzes the irreversible transfer of a propylamine group from the amino donor S-adenosylmethioninamine (decarboxy-AdoMet) to putrescine (1,4-diaminobutane) to yield spermidine. The protein is Polyamine aminopropyltransferase of Prochlorococcus marinus (strain MIT 9515).